We begin with the raw amino-acid sequence, 547 residues long: Mercuric reductase (547 aa).

The HMA domain occupies 5-70 (APTELAITGM…AVVASGYGVH (66 aa)). A metal cation-binding residues include Cys16 and Cys19. The FAD site is built by Ala96 and Thr121. A disulfide bridge links Cys122 with Cys127. FAD contacts are provided by Lys131, Ala197, Asp389, and Val397. Cys544 and Cys545 together coordinate Hg(2+).

This sequence belongs to the class-I pyridine nucleotide-disulfide oxidoreductase family. Homodimer. Requires FAD as cofactor.

It catalyses the reaction Hg + NADP(+) + H(+) = Hg(2+) + NADPH. Resistance to Hg(2+) in bacteria appears to be governed by a specialized system which includes mercuric reductase. MerA protein is responsible for volatilizing mercury as Hg(0). The sequence is that of Mercuric reductase (merA) from Acidithiobacillus ferrooxidans (Thiobacillus ferrooxidans).